A 1092-amino-acid polypeptide reads, in one-letter code: Isoleucine--tRNA ligase (1092 aa).

A 'HIGH' region motif is present at residues Pro-53–His-63. The short motif at Lys-613–Arg-617 is the 'KMSKS' region element. Residue Lys-616 coordinates ATP.

This sequence belongs to the class-I aminoacyl-tRNA synthetase family. IleS type 2 subfamily. Monomer. Zn(2+) serves as cofactor.

The protein localises to the cytoplasm. It carries out the reaction tRNA(Ile) + L-isoleucine + ATP = L-isoleucyl-tRNA(Ile) + AMP + diphosphate. In terms of biological role, catalyzes the attachment of isoleucine to tRNA(Ile). As IleRS can inadvertently accommodate and process structurally similar amino acids such as valine, to avoid such errors it has two additional distinct tRNA(Ile)-dependent editing activities. One activity is designated as 'pretransfer' editing and involves the hydrolysis of activated Val-AMP. The other activity is designated 'posttransfer' editing and involves deacylation of mischarged Val-tRNA(Ile). The sequence is that of Isoleucine--tRNA ligase from Rickettsia peacockii (strain Rustic).